A 405-amino-acid polypeptide reads, in one-letter code: Acetate kinase (405 aa).

N7 lines the Mg(2+) pocket. K14 is a binding site for ATP. R98 is a binding site for substrate. The Proton donor/acceptor role is filled by D155. Residues 214-218 (HLGNG), 289-291 (DLR), and 337-341 (GVGEN) contribute to the ATP site. E390 contributes to the Mg(2+) binding site.

Belongs to the acetokinase family. In terms of assembly, homodimer. Mg(2+) is required as a cofactor. Mn(2+) serves as cofactor.

It localises to the cytoplasm. The catalysed reaction is acetate + ATP = acetyl phosphate + ADP. It functions in the pathway metabolic intermediate biosynthesis; acetyl-CoA biosynthesis; acetyl-CoA from acetate: step 1/2. Its function is as follows. Catalyzes the formation of acetyl phosphate from acetate and ATP. Can also catalyze the reverse reaction. The chain is Acetate kinase from Gloeothece citriformis (strain PCC 7424) (Cyanothece sp. (strain PCC 7424)).